Reading from the N-terminus, the 163-residue chain is Thiol peroxidase (163 aa).

One can recognise a Thioredoxin domain in the interval 16–162 (LQVGDTAHDF…YDAAIAAVKN (147 aa)). Residue C58 is the Cysteine sulfenic acid (-SOH) intermediate of the active site. Residues C58 and C92 are joined by a disulfide bond.

It belongs to the peroxiredoxin family. Tpx subfamily. In terms of assembly, homodimer.

The enzyme catalyses a hydroperoxide + [thioredoxin]-dithiol = an alcohol + [thioredoxin]-disulfide + H2O. Functionally, thiol-specific peroxidase that catalyzes the reduction of hydrogen peroxide and organic hydroperoxides to water and alcohols, respectively. Plays a role in cell protection against oxidative stress by detoxifying peroxides. This Streptococcus gordonii protein is Thiol peroxidase.